A 280-amino-acid chain; its full sequence is MSGSSSPSLWLAPNPSKRWGELFFLFYTPFWLTLCLGIVVPYKLYETFTELEYLLLALVSAVPAFVIPMLLVGKADRSLCWKDRYWVKANLWIIVFSYVGNYFWTHYFFKVLGASYTFPSWKMNNVPHTTFFLTHVCFLFYHVASNITLRRLRHSTADLPDSLKWCFEAAWILALSYFIAYLETIAIANFPYYEFVDRSAMYRVGCLFYAIYFIVSFPMFFRMDEKSTDEWDLSRVAVDALGAAMLVTIILDLWRLFLGPIVPLPEGQNCLQSGLPWFSN.

Helical transmembrane passes span 22–42, 53–73, 89–109, 167–187, 201–221, and 244–264; these read LFFL…VVPY, YLLL…LLVG, ANLW…HYFF, FEAA…TIAI, MYRV…PMFF, and AMLV…IVPL.

It localises to the membrane. It carries out the reaction cycloeucalenol = obtusifoliol. Converts pentacyclic cyclopropyl sterols to tetracyclic sterols. This Arabidopsis thaliana (Mouse-ear cress) protein is Cycloeucalenol cycloisomerase (CPI1).